A 309-amino-acid chain; its full sequence is MITFLPIIFSILIVVTFVIGNFANGFIALANSIEWFKRQKISFADQILTALAVPRVGLLWVLLLNWYATELNPAFYSIEVRITAYNLWAVINHFSNWLATSLSIFYLLKIANFSNLIFLRLKRRVKSVVLVILLGPLLFLVCHLFVINMNQIIWTKEYEGNMTWKIKLRSAMYLSNTTVTILANLVPFTVTLISFLLLVCSLCKHLKKMQLHGKGSQDPSTKVHIKALQTVISFLLLCAIYFVSVIISVWSFKNLENKPVFMFCQAIGFSCSSAHPFILIWGNKKLKQPFLSVLWQMRYWVKGEKPSSS.

Position 1 (Met-1) is a topological domain, extracellular. A helical transmembrane segment spans residues 2–22 (ITFLPIIFSILIVVTFVIGNF). The Cytoplasmic segment spans residues 23 to 46 (ANGFIALANSIEWFKRQKISFADQ). Residues 47–67 (ILTALAVPRVGLLWVLLLNWY) form a helical membrane-spanning segment. Residues 68-86 (ATELNPAFYSIEVRITAYN) lie on the Extracellular side of the membrane. Residues 87–107 (LWAVINHFSNWLATSLSIFYL) traverse the membrane as a helical segment. At 108–126 (LKIANFSNLIFLRLKRRVK) the chain is on the cytoplasmic side. Residues 127 to 147 (SVVLVILLGPLLFLVCHLFVI) traverse the membrane as a helical segment. Over 148 to 178 (NMNQIIWTKEYEGNMTWKIKLRSAMYLSNTT) the chain is Extracellular. 2 N-linked (GlcNAc...) asparagine glycosylation sites follow: Asn-161 and Asn-176. The helical transmembrane segment at 179 to 199 (VTILANLVPFTVTLISFLLLV) threads the bilayer. At 200-229 (CSLCKHLKKMQLHGKGSQDPSTKVHIKALQ) the chain is on the cytoplasmic side. A helical membrane pass occupies residues 230-250 (TVISFLLLCAIYFVSVIISVW). The Extracellular portion of the chain corresponds to 251–259 (SFKNLENKP). The chain crosses the membrane as a helical span at residues 260 to 280 (VFMFCQAIGFSCSSAHPFILI). Residues 281-309 (WGNKKLKQPFLSVLWQMRYWVKGEKPSSS) lie on the Cytoplasmic side of the membrane.

It belongs to the G-protein coupled receptor T2R family.

The protein resides in the membrane. In terms of biological role, receptor that may play a role in the perception of bitterness and is gustducin-linked. May play a role in sensing the chemical composition of the gastrointestinal content. The activity of this receptor may stimulate alpha gustducin, mediate PLC-beta-2 activation and lead to the gating of TRPM5. This Pan paniscus (Pygmy chimpanzee) protein is Taste receptor type 2 member 66 (TAS2R66).